The chain runs to 378 residues: Putative F-box protein At4g17565 (378 aa).

The region spanning 16 to 63 is the F-box domain; that stretch reads PKWSELCPDLLRSIFEQLSFTNLNRAKLVCRSWNSASRGCVPKRNQIP.

The protein is Putative F-box protein At4g17565 of Arabidopsis thaliana (Mouse-ear cress).